The sequence spans 216 residues: Pyrophosphatase PpaX (216 aa).

The active-site Nucleophile is the D9.

This sequence belongs to the HAD-like hydrolase superfamily. PpaX family. It depends on Mg(2+) as a cofactor.

It carries out the reaction diphosphate + H2O = 2 phosphate + H(+). Its function is as follows. Hydrolyzes pyrophosphate formed during P-Ser-HPr dephosphorylation by HPrK/P. Might play a role in controlling the intracellular pyrophosphate pool. This chain is Pyrophosphatase PpaX, found in Bacillus cereus (strain B4264).